A 406-amino-acid polypeptide reads, in one-letter code: Acetate kinase (406 aa).

Asparagine 8 contacts Mg(2+). An ATP-binding site is contributed by lysine 15. Residue arginine 92 participates in substrate binding. Aspartate 149 acts as the Proton donor/acceptor in catalysis. ATP-binding positions include 209–213 (HLGNG), 283–285 (DFR), and 331–335 (GVGEN). A Mg(2+)-binding site is contributed by glutamate 385.

It belongs to the acetokinase family. Homodimer. Mg(2+) is required as a cofactor. Mn(2+) serves as cofactor.

It localises to the cytoplasm. The enzyme catalyses acetate + ATP = acetyl phosphate + ADP. It functions in the pathway metabolic intermediate biosynthesis; acetyl-CoA biosynthesis; acetyl-CoA from acetate: step 1/2. Functionally, catalyzes the formation of acetyl phosphate from acetate and ATP. Can also catalyze the reverse reaction. The sequence is that of Acetate kinase from Corynebacterium aurimucosum (strain ATCC 700975 / DSM 44827 / CIP 107346 / CN-1) (Corynebacterium nigricans).